Here is a 304-residue protein sequence, read N- to C-terminus: MEKFELHILGCGSALPTTRHFATSQVVNLRDKLFMIDCGEGAQMQLRKSRLKFSRLNHIFISHLHGDHCFGLMGLISTFGLLGRTAELHIHSPKGLEELLTPMLNFFCHTLAYKVIFHEFDTRQTSVVYEDRSMTVTTIPLQHRIPCCGFLFAEKARPNHIIRDMVDFYKVPVYELNRIKNGSDYVTPEGEVIANTRLTRPSDPPRKYAYCSDTIFRPEIVEQLSGVDLLFHEATFAESELARAKETYHTTAAQAARIALEAGVRQLVIGHFSARYEDESILLKEASAVFPNTILAKENLCISL.

Zn(2+) contacts are provided by histidine 63, histidine 65, aspartate 67, histidine 68, histidine 143, aspartate 213, and histidine 271. Aspartate 67 (proton acceptor) is an active-site residue.

It belongs to the RNase Z family. Homodimer. Zn(2+) serves as cofactor.

The catalysed reaction is Endonucleolytic cleavage of RNA, removing extra 3' nucleotides from tRNA precursor, generating 3' termini of tRNAs. A 3'-hydroxy group is left at the tRNA terminus and a 5'-phosphoryl group is left at the trailer molecule.. In terms of biological role, zinc phosphodiesterase, which displays some tRNA 3'-processing endonuclease activity. Probably involved in tRNA maturation, by removing a 3'-trailer from precursor tRNA. This Bacteroides fragilis (strain YCH46) protein is Ribonuclease Z.